Here is a 159-residue protein sequence, read N- to C-terminus: Xanthine dehydrogenase iron-sulfur-binding subunit (159 aa).

Residues 7–82 (ITIECTINGM…GKEIRTLEGE (76 aa)) form the 2Fe-2S ferredoxin-type domain. [2Fe-2S] cluster is bound by residues C44, C49, and C52.

In terms of assembly, heterotrimer of XdhA, XdhB and XdhC. It depends on [2Fe-2S] cluster as a cofactor.

It functions in the pathway purine metabolism; hypoxanthine degradation; urate from hypoxanthine: step 1/2. Its function is as follows. Iron-sulfur subunit of the xanthine dehydrogenase complex. In Escherichia coli O157:H7, this protein is Xanthine dehydrogenase iron-sulfur-binding subunit (xdhC).